The primary structure comprises 514 residues: tRNA-2-methylthio-N(6)-dimethylallyladenosine synthase (514 aa).

Residues 68 to 186 (RTFLIKTYGC…LPEILEEAYL (119 aa)) enclose the MTTase N-terminal domain. 6 residues coordinate [4Fe-4S] cluster: C77, C113, C147, C223, C227, and C230. Residues 209–439 (RDGHIKAWVN…NKKVGIYSQQ (231 aa)) form the Radical SAM core domain. Positions 442-505 (SQYEGKIVTV…QYSLNGTFIQ (64 aa)) constitute a TRAM domain.

This sequence belongs to the methylthiotransferase family. MiaB subfamily. As to quaternary structure, monomer. [4Fe-4S] cluster serves as cofactor.

It localises to the cytoplasm. It catalyses the reaction N(6)-dimethylallyladenosine(37) in tRNA + (sulfur carrier)-SH + AH2 + 2 S-adenosyl-L-methionine = 2-methylsulfanyl-N(6)-dimethylallyladenosine(37) in tRNA + (sulfur carrier)-H + 5'-deoxyadenosine + L-methionine + A + S-adenosyl-L-homocysteine + 2 H(+). Its function is as follows. Catalyzes the methylthiolation of N6-(dimethylallyl)adenosine (i(6)A), leading to the formation of 2-methylthio-N6-(dimethylallyl)adenosine (ms(2)i(6)A) at position 37 in tRNAs that read codons beginning with uridine. In Staphylococcus epidermidis (strain ATCC 35984 / DSM 28319 / BCRC 17069 / CCUG 31568 / BM 3577 / RP62A), this protein is tRNA-2-methylthio-N(6)-dimethylallyladenosine synthase.